A 72-amino-acid chain; its full sequence is Translation initiation factor IF-1 (72 aa).

The region spanning 1–72 (MAKEDNFELE…SKGRITYRAR (72 aa)) is the S1-like domain.

The protein belongs to the IF-1 family. As to quaternary structure, component of the 30S ribosomal translation pre-initiation complex which assembles on the 30S ribosome in the order IF-2 and IF-3, IF-1 and N-formylmethionyl-tRNA(fMet); mRNA recruitment can occur at any time during PIC assembly.

It localises to the cytoplasm. In terms of biological role, one of the essential components for the initiation of protein synthesis. Stabilizes the binding of IF-2 and IF-3 on the 30S subunit to which N-formylmethionyl-tRNA(fMet) subsequently binds. Helps modulate mRNA selection, yielding the 30S pre-initiation complex (PIC). Upon addition of the 50S ribosomal subunit IF-1, IF-2 and IF-3 are released leaving the mature 70S translation initiation complex. This Saccharophagus degradans (strain 2-40 / ATCC 43961 / DSM 17024) protein is Translation initiation factor IF-1.